Reading from the N-terminus, the 25-residue chain is Ocellatin-F1 (25 aa).

Leucine amide is present on Leu25.

It belongs to the frog skin active peptide (FSAP) family. Ocellatin subfamily. As to expression, expressed by the skin glands.

The protein resides in the secreted. In terms of biological role, antibacterial peptide that inhibits reference strains of both Gram-negative bacteria (E.coli, P.aeruginosa, E.cloacae, K.pneumoniae, and A.actinomycetemcomitans) and Gram-positive bacteria (S.aureus) with relatively low potencies (MIC=25-400 uM). Shows antifungal activity against C.lusitaniae (MIC=50.25 uM), but no activity against C.albicans. In the presence of an alkaloid (bufotenine), inhibits cellular infection by the rabies virus. The peptide shows very low hemolytic activity against rabbit erythrocytes. The low amphipathicity of alpha-helices demonstrated by wheel projection as well as the low cationicity may explain the low antibacterial and hemolytic potencies. This is Ocellatin-F1 from Leptodactylus labyrinthicus (Labyrinth frog).